The following is a 457-amino-acid chain: Glycine receptor subunit alpha-1 (457 aa).

The first 28 residues, 1–28 (MYSFNTLRLYLWETIVFFSLAASKEAEA), serve as a signal peptide directing secretion. Residues 29–250 (ARSAPKPMSP…RFHLERQMGY (222 aa)) are Extracellular-facing. Residue N66 is glycosylated (N-linked (GlcNAc...) asparagine). Glycine-binding residues include R93 and S157. C166 and C180 are oxidised to a cystine. The Zn(2+) site is built by E220 and D222. C226 and C237 are oxidised to a cystine. 230-235 (YNTGKF) contacts strychnine. Position 232 (T232) interacts with glycine. Position 243 (H243) interacts with Zn(2+). The helical transmembrane segment at 251-272 (YLIQMYIPSLLIVILSWISFWI) threads the bilayer. The Cytoplasmic segment spans residues 273–277 (NMDAA). Residues 278–298 (PARVGLGITTVLTMTTQSSGS) form a helical membrane-spanning segment. The Extracellular portion of the chain corresponds to 299–309 (RASLPKVSYVK). Residues 310 to 330 (AIDIWMAVCLLFVFSALLEYA) form a helical membrane-spanning segment. Over 331-425 (AVNFVSRQHK…FIQRAKKIDK (95 aa)) the chain is Cytoplasmic. The tract at residues 391–410 (KGANNSNTTNPPPAPSKSPE) is disordered. A helical transmembrane segment spans residues 426-446 (ISRIGFPMAFLIFNMFYWIIY). The Extracellular portion of the chain corresponds to 447-457 (KIVRREDVHNQ).

It belongs to the ligand-gated ion channel (TC 1.A.9) family. Glycine receptor (TC 1.A.9.3) subfamily. GLRA1 sub-subfamily. As to quaternary structure, interacts with GLRB to form heteropentameric channels; this is probably the predominant form in vivo. Heteropentamer composed of four GLRA1 subunits and one GLRB subunit. Heteropentamer composed of two GLRA1 and three GLRB. Heteropentamer composed of three GLRA1 and two GLRB. Homopentamer (in vitro). Both homopentamers and heteropentamers form functional ion channels, but their characteristics are subtly different.

It is found in the postsynaptic cell membrane. The protein localises to the synapse. It localises to the perikaryon. The protein resides in the cell projection. Its subcellular location is the dendrite. It is found in the cell membrane. It catalyses the reaction chloride(in) = chloride(out). Channel opening is triggered by extracellular glycine. Channel characteristics depend on the subunit composition; heteropentameric channels are activated by lower glycine levels and display faster desensitization. Channel opening is also triggered by taurine and beta-alanine. Channel activity is potentiated by nanomolar concentrations of Zn(2+); half-maximal activation is observed with 37 nM Zn(2+). Inhibited by higher Zn(2+) levels; haf-maximal inhibition occurs at 20 uM Zn(2+). Inhibited by strychnine. Strychnine binding locks the channel in a closed conformation and prevents channel opening in response to extracellular glycine. Inhibited by lindane. Inhibited by picrotoxin. In terms of biological role, subunit of heteromeric glycine-gated chloride channels. Plays an important role in the down-regulation of neuronal excitability. Contributes to the generation of inhibitory postsynaptic currents. Channel activity is potentiated by ethanol. Potentiation of channel activity by intoxicating levels of ethanol contribute to the sedative effects of ethanol. In Homo sapiens (Human), this protein is Glycine receptor subunit alpha-1 (GLRA1).